We begin with the raw amino-acid sequence, 722 residues long: G2-specific protein kinase fin1 (722 aa).

The region spanning 4–281 is the Protein kinase domain; it reads YKILECIGHG…TYQLLRSPIL (278 aa). ATP-binding positions include 10 to 18 and Lys33; that span reads IGHGSFGRI. Asp151 (proton acceptor) is an active-site residue. The interval 528–557 is disordered; it reads LSVESDETAVSASSGESVPTDSTLTDTKSK. The segment covering 535–546 has biased composition (polar residues); sequence TAVSASSGESVP.

It belongs to the protein kinase superfamily. Ser/Thr protein kinase family. NIMA subfamily.

Its subcellular location is the cytoplasm. It is found in the cytoskeleton. It localises to the microtubule organizing center. The protein resides in the spindle pole body. It carries out the reaction L-seryl-[protein] + ATP = O-phospho-L-seryl-[protein] + ADP + H(+). It catalyses the reaction L-threonyl-[protein] + ATP = O-phospho-L-threonyl-[protein] + ADP + H(+). Functionally, promotes chromosome condensation and nuclear envelope dynamics during mitosis. Activity appears at metaphase-anaphase transition. This is G2-specific protein kinase fin1 (fin1) from Schizosaccharomyces pombe (strain 972 / ATCC 24843) (Fission yeast).